The sequence spans 353 residues: Mitochondrial ubiquitin ligase activator of nfkb 1 (353 aa).

Residues 1–8 (MENGGRPS) lie on the Cytoplasmic side of the membrane. The helical transmembrane segment at 9 to 29 (VGQVILLTTSSAITALFYSIY) threads the bilayer. The Mitochondrial intermembrane portion of the chain corresponds to 30–239 (RHKYRSVQTL…LLEKQEVQMR (210 aa)). Residues 240 to 260 (WWRILSIVFGVASCITLFFIL) traverse the membrane as a helical segment. Residues 261 to 353 (RRKYRHYKEK…IDRIVPLYNS (93 aa)) lie on the Cytoplasmic side of the membrane. The RING-type zinc-finger motif lies at 303 to 341 (CSICLSTEKSCVFLECGHVCSCISCYQALPSPKKCPICR).

Homooligomer.

It is found in the mitochondrion outer membrane. The catalysed reaction is S-ubiquitinyl-[E2 ubiquitin-conjugating enzyme]-L-cysteine + [acceptor protein]-L-lysine = [E2 ubiquitin-conjugating enzyme]-L-cysteine + N(6)-ubiquitinyl-[acceptor protein]-L-lysine.. It functions in the pathway protein modification; protein ubiquitination. E3 ubiquitin-protein ligase that plays a role in the control of mitochondrial morphology. Promotes mitochondrial fragmentation and influences mitochondrial localization. Inhibits cell growth. E3 ubiquitin ligases accept ubiquitin from an E2 ubiquitin-conjugating enzyme in the form of a thioester and then directly transfer the ubiquitin to targeted substrates. In Xenopus laevis (African clawed frog), this protein is Mitochondrial ubiquitin ligase activator of nfkb 1 (mul1).